Reading from the N-terminus, the 393-residue chain is Digeranylgeranylglycerophospholipid reductase (393 aa).

FAD-binding residues include Ala-13, Asp-32, Cys-43, Ala-44, Gly-46, Arg-95, Val-119, Asp-274, and Gly-286. 2 residues coordinate a 2,3-bis-O-(geranylgeranyl)-sn-glycerol 1-phospholipid: Arg-327 and Gly-363.

It belongs to the geranylgeranyl reductase family. DGGGPL reductase subfamily. It depends on FAD as a cofactor.

It carries out the reaction a 2,3-bis-O-phytanyl-sn-glycerol 1-phospholipid + 8 A = a 2,3-bis-O-(geranylgeranyl)-sn-glycerol 1-phospholipid + 8 AH2. It catalyses the reaction 2,3-bis-O-(phytanyl)-sn-glycerol 1-phosphate + 8 A = 2,3-bis-O-(geranylgeranyl)-sn-glycerol 1-phosphate + 8 AH2. The catalysed reaction is CDP-2,3-bis-O-(geranylgeranyl)-sn-glycerol + 8 AH2 = CDP-2,3-bis-O-(phytanyl)-sn-glycerol + 8 A. The enzyme catalyses archaetidylserine + 8 AH2 = 2,3-bis-O-phytanyl-sn-glycero-3-phospho-L-serine + 8 A. The protein operates within membrane lipid metabolism; glycerophospholipid metabolism. Is involved in the reduction of 2,3-digeranylgeranylglycerophospholipids (unsaturated archaeols) into 2,3-diphytanylglycerophospholipids (saturated archaeols) in the biosynthesis of archaeal membrane lipids. Catalyzes the formation of archaetidic acid (2,3-di-O-phytanyl-sn-glyceryl phosphate) from 2,3-di-O-geranylgeranylglyceryl phosphate (DGGGP) via the hydrogenation of each double bond of the isoprenoid chains. Is also probably able to reduce double bonds of geranyl groups in CDP-2,3-bis-O-(geranylgeranyl)-sn-glycerol and archaetidylserine, thus acting at various stages in the biosynthesis of archaeal membrane lipids. The polypeptide is Digeranylgeranylglycerophospholipid reductase (Pyrococcus horikoshii (strain ATCC 700860 / DSM 12428 / JCM 9974 / NBRC 100139 / OT-3)).